The following is a 359-amino-acid chain: tRNA-specific 2-thiouridylase MnmA (359 aa).

Residues 6–13 and Leu-32 each bind ATP; that span reads AMSGGVDS. The active-site Nucleophile is Cys-97. An intrachain disulfide couples Cys-97 to Cys-195. Gly-121 is an ATP binding site. Residues 144 to 146 form an interaction with tRNA region; that stretch reads KDQ. The active-site Cysteine persulfide intermediate is the Cys-195.

Belongs to the MnmA/TRMU family.

The protein localises to the cytoplasm. It catalyses the reaction S-sulfanyl-L-cysteinyl-[protein] + uridine(34) in tRNA + AH2 + ATP = 2-thiouridine(34) in tRNA + L-cysteinyl-[protein] + A + AMP + diphosphate + H(+). In terms of biological role, catalyzes the 2-thiolation of uridine at the wobble position (U34) of tRNA, leading to the formation of s(2)U34. The protein is tRNA-specific 2-thiouridylase MnmA of Tropheryma whipplei (strain TW08/27) (Whipple's bacillus).